Here is a 181-residue protein sequence, read N- to C-terminus: Oligoribonuclease (181 aa).

The 164-residue stretch at 8–171 (LIWLDLEMTG…DDIKDSIMEL (164 aa)) folds into the Exonuclease domain. Residue Tyr129 is part of the active site.

It belongs to the oligoribonuclease family.

The protein localises to the cytoplasm. 3'-to-5' exoribonuclease specific for small oligoribonucleotides. This is Oligoribonuclease from Pseudoalteromonas translucida (strain TAC 125).